Here is a 515-residue protein sequence, read N- to C-terminus: Pescadillo homolog (515 aa).

A coiled-coil region spans residues 270-327; that stretch reads EVLAALNHTLKIIQTQEEDLEVDEFPIDPNSEDAEAIQAQKEEETKLERLKNLFSECK. One can recognise a BRCT domain in the interval 318 to 411; sequence RLKNLFSECK…KLLPVEEYFP (94 aa). The interval 477–515 is disordered; the sequence is RLYEKIMHSKKKKRSEVRKLESKRKVHDEEKAKKKLKSS. Basic residues predominate over residues 484–501; sequence HSKKKKRSEVRKLESKRK.

It belongs to the pescadillo family.

It localises to the nucleus. The protein resides in the nucleolus. Its subcellular location is the nucleoplasm. Required for maturation of ribosomal RNAs and formation of the large ribosomal subunit. The chain is Pescadillo homolog from Nematostella vectensis (Starlet sea anemone).